We begin with the raw amino-acid sequence, 314 residues long: BTB/POZ domain-containing adapter for CUL3-mediated RhoA degradation protein 2 (314 aa).

Positions 32 to 100 (KYVRLNVGGS…LRDDTIALPK (69 aa)) constitute a BTB domain.

This sequence belongs to the BACURD family. Component of the BCR(TNFAIP1) E3 ubiquitin ligase complex, at least composed of CUL3, TNFAIP1/BACURD2 and RBX1.

It is found in the cytoplasm. The protein resides in the nucleus. The protein localises to the endosome. Its pathway is protein modification; protein ubiquitination. Its function is as follows. Substrate-specific adapter of a BCR (BTB-CUL3-RBX1) E3 ubiquitin-protein ligase complex involved in regulation of cytoskeleton structure. The BCR(TNFAIP1) E3 ubiquitin ligase complex mediates the ubiquitination of target proteins, leading to their degradation by the proteasome. The polypeptide is BTB/POZ domain-containing adapter for CUL3-mediated RhoA degradation protein 2 (TNFAIP1) (Gallus gallus (Chicken)).